The following is a 203-amino-acid chain: Cardiotrophin-1 (203 aa).

This sequence belongs to the IL-6 superfamily. As to expression, highly expressed in heart, skeletal muscle, liver, lung and kidney. Lower levels in testis and brain. No expression in spleen.

The protein resides in the secreted. Functionally, induces cardiac myocyte hypertrophy in vitro. Binds to and activates the ILST/gp130 receptor. The polypeptide is Cardiotrophin-1 (Ctf1) (Mus musculus (Mouse)).